The chain runs to 503 residues: E3 ubiquitin-protein ligase ariadne-1 (503 aa).

Positions 1 to 11 (MDSDNDNDFCD) are enriched in acidic residues. The segment at 1 to 40 (MDSDNDNDFCDNVDSGNVSSGDDGDDDFGMEVDLPSSADR) is disordered. The segment covering 12-21 (NVDSGNVSSG) has biased composition (low complexity). The TRIAD supradomain stretch occupies residues 129–340 (QCEECEICFS…SSWYNCNRYD (212 aa)). Zn(2+) is bound by residues C133, C136, C150, H152, C155, C158, C178, C183, C223, C228, C244, C246, C251, C254, H259, C264, C291, and C294. An RING-type 1 zinc finger spans residues 133–183 (CEICFSQLPPDSMAGLECGHRFCMPCWHEYLSTKIVAEGLGQTISCAAHGC). Positions 133–201 (CEICFSQLPP…VANLVTDARV (69 aa)) are important for interaction with Ubc10. The IBR-type zinc-finger motif lies at 203 to 264 (VKYQQLITNS…GENWHDPVKC (62 aa)). The segment at 291-322 (CPRCSVTIEKDGGCNHMVCKNQNCKNEFCWVC) adopts an RING-type 2; atypical zinc-finger fold. C304 is a catalytic residue. Positions 309, 314, 319, 322, 329, and 336 each coordinate Zn(2+). A coiled-coil region spans residues 341–361 (EDEAKTARDAQEKLRSSLARY).

The protein belongs to the RBR family. Ariadne subfamily. In terms of assembly, can form homodimers. Interacts (via RING-type 1 zinc finger) with Ubc10. Interacts with the LINC complex member koi. Interacts with park. Interacts with ari-2. Specifically interacts with isoform ECR-A of EcR. In terms of processing, autophosphorylated. Widely expressed, with prominent levels in the nervous system and female gonads.

It is found in the cytoplasm. Its subcellular location is the nucleus. The catalysed reaction is [E2 ubiquitin-conjugating enzyme]-S-ubiquitinyl-L-cysteine + [acceptor protein]-L-lysine = [E2 ubiquitin-conjugating enzyme]-L-cysteine + [acceptor protein]-N(6)-ubiquitinyl-L-lysine.. Functionally, atypical E3 ubiquitin-protein ligase, which catalyzes ubiquitination of target proteins together with ubiquitin-conjugating enzyme E2 Ubc10. Controls the subcellular localization and morphology of muscle nuclei (myonuclei) by regulating the protein levels and distribution of the LINC (LInker of Nucleoskeleton and Cytoskeleton) complex. Functions by mediating the monoubiquitination of the LINC complex subunit koi leading to its subsequent proteasomal degradation. Appears to function, at least partially redundantly, with the RBR E3 ligase family member park in nuclear localization and morphology. Likely to function in metamorphosis by regulating the proteins levels of EcR isoform A (ECR-A) and its heterodimeric partner usp, via the ubiquitination and subsequent degradation of ECR-A. This Drosophila melanogaster (Fruit fly) protein is E3 ubiquitin-protein ligase ariadne-1.